We begin with the raw amino-acid sequence, 165 residues long: Phosphopantetheine adenylyltransferase (165 aa).

A substrate-binding site is contributed by Ser-10. ATP-binding positions include Ser-10–Phe-11 and His-18. 3 residues coordinate substrate: Lys-42, Leu-74, and Arg-88. ATP contacts are provided by residues Gly-89–Arg-91, Glu-99, and Tyr-124–Ser-130.

The protein belongs to the bacterial CoaD family. As to quaternary structure, homohexamer. Requires Mg(2+) as cofactor.

It is found in the cytoplasm. It carries out the reaction (R)-4'-phosphopantetheine + ATP + H(+) = 3'-dephospho-CoA + diphosphate. It functions in the pathway cofactor biosynthesis; coenzyme A biosynthesis; CoA from (R)-pantothenate: step 4/5. Functionally, reversibly transfers an adenylyl group from ATP to 4'-phosphopantetheine, yielding dephospho-CoA (dPCoA) and pyrophosphate. This chain is Phosphopantetheine adenylyltransferase, found in Anoxybacillus flavithermus (strain DSM 21510 / WK1).